The sequence spans 190 residues: Large ribosomal subunit protein uL5 (190 aa).

This sequence belongs to the universal ribosomal protein uL5 family. Part of the 50S ribosomal subunit; part of the 5S rRNA/L5/L18/L25 subcomplex. Contacts the 5S rRNA and the P site tRNA. Forms a bridge to the 30S subunit in the 70S ribosome.

Its function is as follows. This is one of the proteins that bind and probably mediate the attachment of the 5S RNA into the large ribosomal subunit, where it forms part of the central protuberance. In the 70S ribosome it contacts protein S13 of the 30S subunit (bridge B1b), connecting the 2 subunits; this bridge is implicated in subunit movement. Contacts the P site tRNA; the 5S rRNA and some of its associated proteins might help stabilize positioning of ribosome-bound tRNAs. The protein is Large ribosomal subunit protein uL5 of Bifidobacterium adolescentis (strain ATCC 15703 / DSM 20083 / NCTC 11814 / E194a).